Reading from the N-terminus, the 436-residue chain is 3-ketoacyl-CoA thiolase (436 aa).

Residue Cys99 is the Acyl-thioester intermediate of the active site. Catalysis depends on proton acceptor residues His392 and Cys422.

It belongs to the thiolase-like superfamily. Thiolase family. As to quaternary structure, heterotetramer of two alpha chains (FadJ) and two beta chains (FadI).

Its subcellular location is the cytoplasm. It carries out the reaction an acyl-CoA + acetyl-CoA = a 3-oxoacyl-CoA + CoA. The protein operates within lipid metabolism; fatty acid beta-oxidation. Functionally, catalyzes the final step of fatty acid oxidation in which acetyl-CoA is released and the CoA ester of a fatty acid two carbons shorter is formed. The protein is 3-ketoacyl-CoA thiolase of Salmonella dublin (strain CT_02021853).